The primary structure comprises 122 residues: Non-specific lipid-transfer protein (122 aa).

The first 19 residues, 1–19 (MGVSRACFVVMVVVYMVVA), serve as a signal peptide directing secretion. A propeptide spanning residues 20–29 (ATPNVKLAEA) is cleaved from the precursor. Disulfide bonds link Cys32/Cys81, Cys42/Cys58, Cys59/Cys104, and Cys79/Cys118.

In terms of assembly, monomer.

In terms of biological role, plant non-specific lipid-transfer proteins transfer phospholipids as well as galactolipids across membranes. May play a role in wax or cutin deposition in the cell walls of expanding epidermal cells and certain secretory tissues. Binds saturated fatty acids, unsaturated fatty acids, lysolipids and, with highest efficiency, jasmonic acid. Has weak antimicrobial activity against fungi. Inhibits spore germination and hyphae elongation in A.niger VKM F-2259 and N.crassa VKM F-184. Has no antibacterial activity against A.tumefaciens A281, C.michiganensis VKM Ac-144 and P.syringae VKM B-1546. The polypeptide is Non-specific lipid-transfer protein (Anethum graveolens (Dill)).